The primary structure comprises 120 residues: Glycine cleavage system H protein (120 aa).

Residues 17-99 (VATVGITEHA…QGAAWFFKLK (83 aa)) enclose the Lipoyl-binding domain. K58 carries the N6-lipoyllysine modification.

This sequence belongs to the GcvH family. The glycine cleavage system is composed of four proteins: P, T, L and H. (R)-lipoate serves as cofactor.

Functionally, the glycine cleavage system catalyzes the degradation of glycine. The H protein shuttles the methylamine group of glycine from the P protein to the T protein. The sequence is that of Glycine cleavage system H protein from Sinorhizobium fredii (strain NBRC 101917 / NGR234).